A 119-amino-acid polypeptide reads, in one-letter code: Flagellar transcriptional regulator FlhD (119 aa).

This sequence belongs to the FlhD family. In terms of assembly, homodimer; disulfide-linked. Forms a heterohexamer composed of two FlhC and four FlhD subunits. Each FlhC binds a FlhD dimer, forming a heterotrimer, and a hexamer assembles by dimerization of two heterotrimers.

The protein localises to the cytoplasm. Its function is as follows. Functions in complex with FlhC as a master transcriptional regulator that regulates transcription of several flagellar and non-flagellar operons by binding to their promoter region. Activates expression of class 2 flagellar genes, including fliA, which is a flagellum-specific sigma factor that turns on the class 3 genes. Also regulates genes whose products function in a variety of physiological pathways. This is Flagellar transcriptional regulator FlhD from Cronobacter sakazakii (strain ATCC BAA-894) (Enterobacter sakazakii).